The chain runs to 3511 residues: Unconventional myosin-XV (3511 aa).

4 disordered regions span residues 1–44 (MADE…TPKI), 574–690 (KKPI…SLRQ), 712–1030 (FAEP…PNKN), and 1105–1135 (VSSF…PQAC). The span at 622-634 (SQPQARNNNNSHG) shows a compositional bias: polar residues. The segment covering 654 to 672 (PPMPAPSPSPASPLTPPFS) has biased composition (pro residues). The span at 769-792 (PSLRSLPGQGYHSPLGPLSPQLSL) shows a compositional bias: low complexity. Residues 797–807 (FQPPFPPPPRR) are compositionally biased toward pro residues. The Myosin motor domain maps to 1206 to 1883 (DGVEDMTQLE…LHQLLESMRE (678 aa)). 1299-1306 (GESGSGKT) serves as a coordination point for ATP. Positions 1307-1334 (EATKLILRCLAAMNQRRDVMQQIKILEA) form a coiled coil. The interval 1776 to 1783 (FVRCLKPN) is actin-binding. The tract at residues 1872 to 2013 (EHLHQLLESM…SSGPRVAVVR (142 aa)) is neck or regulatory domain. 2 IQ domains span residues 1886-1908 (QNRA…HFRS) and 1909-1938 (LRRK…SLLK). Positions 2014-3511 (APRLQAEPCV…TLPPSEITLL (1498 aa)) are tail. The MyTH4 1 domain maps to 2049-2195 (MLTVPLKMPL…PTQLEWTAIQ (147 aa)). Disordered regions lie at residues 2330–2359 (SHKE…GEST), 2392–2425 (YRMK…PIPG), 2460–2509 (PLSA…SVAK), 2565–2584 (KQPP…GKVF), and 2629–2648 (RPCM…PPED). The segment covering 2337–2351 (NGETEAQRWTSNRQA) has biased composition (polar residues). The span at 2395–2406 (KGGGQPGGGGGS) shows a compositional bias: gly residues. Basic and acidic residues predominate over residues 2410-2420 (DTSRRPPEPKL). Over residues 2573 to 2584 (PEARRTDGGKVF) the composition is skewed to basic and acidic residues. Positions 2848 to 2934 (KDSDYVVAVR…PSELVQPAAA (87 aa)) constitute an SH3 domain. The tract at residues 2964–2984 (EVGRRREGPPVRARSADSGED) is disordered. The span at 2965 to 2980 (VGRRREGPPVRARSAD) shows a compositional bias: basic and acidic residues. The MyTH4 2 domain maps to 3031-3185 (FTKVPIQESL…PSNMELRAML (155 aa)). The region spanning 3190-3511 (SKRQLFLLPG…TLPPSEITLL (322 aa)) is the FERM domain.

It belongs to the TRAFAC class myosin-kinesin ATPase superfamily. Myosin family. As to quaternary structure, interacts with the third PDZ domain of WHRN which is necessary for localization of WHRN to stereocilium tips. Interacts with FASLG. Interacts with EPS8. In terms of tissue distribution, in the developing inner ear, expressed in cochlea and vestibular apparatus. Expression appears to be restricted to cochlear neurosensory cells and upper epithelial layer of macula saccula. Also expressed in macula utriculi and cristae ampullaris of the semicircular canals. In adult cochlear hair cells, highest expression in stereocilia and apical body.

The protein resides in the cell projection. It is found in the stereocilium. Its subcellular location is the cytoplasm. The protein localises to the cytoskeleton. Myosins are actin-based motor molecules with ATPase activity. Unconventional myosins serve in intracellular movements. Their highly divergent tails are presumed to bind to membranous compartments, which would be moved relative to actin filaments. Required for the arrangement of stereocilia in mature hair bundles. The protein is Unconventional myosin-XV (Myo15a) of Mus musculus (Mouse).